Here is a 39-residue protein sequence, read N- to C-terminus: Cytochrome b559 subunit beta (39 aa).

Residues 14-30 (WLAVHGLAVPTVFFLGS) traverse the membrane as a helical segment. Position 18 (His-18) interacts with heme.

This sequence belongs to the PsbE/PsbF family. In terms of assembly, heterodimer of an alpha subunit and a beta subunit. PSII is composed of 1 copy each of membrane proteins PsbA, PsbB, PsbC, PsbD, PsbE, PsbF, PsbH, PsbI, PsbJ, PsbK, PsbL, PsbM, PsbT, PsbX, PsbY, PsbZ, Psb30/Ycf12, at least 3 peripheral proteins of the oxygen-evolving complex and a large number of cofactors. It forms dimeric complexes. Requires heme b as cofactor.

It is found in the plastid. The protein resides in the chloroplast thylakoid membrane. Functionally, this b-type cytochrome is tightly associated with the reaction center of photosystem II (PSII). PSII is a light-driven water:plastoquinone oxidoreductase that uses light energy to abstract electrons from H(2)O, generating O(2) and a proton gradient subsequently used for ATP formation. It consists of a core antenna complex that captures photons, and an electron transfer chain that converts photonic excitation into a charge separation. This Pinus koraiensis (Korean pine) protein is Cytochrome b559 subunit beta.